Consider the following 207-residue polypeptide: C-type lectin domain family 2 member D (207 aa).

At M1 to K41 the chain is on the cytoplasmic side. Residues S7 and S12 each carry the phosphoserine modification. Residues L42 to A62 form a helical; Signal-anchor for type II membrane protein membrane-spanning segment. Residues L63–S207 lie on the Extracellular side of the membrane. C80 and C91 form a disulfide bridge. A C-type lectin domain is found at V87–T202. Residue N100 is glycosylated (N-linked (GlcNAc...) asparagine).

In terms of assembly, homodimer; disulfide-linked. Post-translationally, N-glycosylated. In terms of tissue distribution, detected in fetal heart, brain, lung, chondrocytes, perichondrium and osteoblasts, and in adult splenocytes, thymocytes, lymph-node cells, osteoblasts, growth plate chondrocytes and skeletal muscle overlying the bone (at protein level). Ubiquitous. Detected in thymus, bone marrow, lung, gut, heart, skeletal muscle, ovary, spleen, ileum, liver and kidney.

It localises to the cell membrane. In terms of biological role, receptor for KLRB1B that protects target cells against natural killer cell-mediated lysis. Inhibits osteoclast formation. Binds high molecular weight sulfated glycosaminoglycans. The sequence is that of C-type lectin domain family 2 member D (Clec2d) from Mus musculus (Mouse).